We begin with the raw amino-acid sequence, 146 residues long: Large ribosomal subunit protein uL15 (146 aa).

Positions 1-57 (MDLSNLKAAEGSVHSDNFRRGRGHGSGNGKTAGKGHKGQKARSGAPRPGFEGGQMPL) are disordered.

This sequence belongs to the universal ribosomal protein uL15 family. In terms of assembly, part of the 50S ribosomal subunit.

Its function is as follows. Binds to the 23S rRNA. The chain is Large ribosomal subunit protein uL15 from Agathobacter rectalis (strain ATCC 33656 / DSM 3377 / JCM 17463 / KCTC 5835 / VPI 0990) (Eubacterium rectale).